Consider the following 594-residue polypeptide: RAS guanyl-releasing protein 2-B (594 aa).

Residues 3 to 121 (SSDLDKGLTI…SLIDIESVPS (119 aa)) enclose the N-terminal Ras-GEF domain. The Ras-GEF domain maps to 149 to 382 (DPAELAEHLT…YQLSLQREPR (234 aa)). Positions 377 to 403 (LQREPRARSTQTHAKSPPSPSPPLEEW) are disordered. EF-hand domains are found at residues 418–453 (HIEK…FPYL) and 455–482 (AFNE…ASSV). Asp431, Asp433, Asp435, His437, Glu442, Asp460, Asn462, Asp464, Lys466, and Glu471 together coordinate Ca(2+). The segment at 490–540 (IHNFAERTFLRPVSCQHCRNLILGIYKKGLKCKACGITCHKHCRDHLSIEC) adopts a Phorbol-ester/DAG-type zinc-finger fold.

It belongs to the RASGRP family.

The protein localises to the cytoplasm. It is found in the cytosol. It localises to the cell membrane. The protein resides in the synapse. Its subcellular location is the synaptosome. Its function is as follows. Functions as a calcium- and DAG-regulated nucleotide exchange factor specifically activating Rap through the exchange of bound GDP for GTP. May function in cell aggregation and adhesion. In Xenopus laevis (African clawed frog), this protein is RAS guanyl-releasing protein 2-B (rasgrp2-b).